The chain runs to 320 residues: Mycothiol acetyltransferase (320 aa).

N-acetyltransferase domains are found at residues 8–141 (SHLT…RSLR) and 152–320 (LQIR…AALA). Glu-36 is a 1D-myo-inositol 2-(L-cysteinylamino)-2-deoxy-alpha-D-glucopyranoside binding site. Acetyl-CoA is bound by residues 80–82 (LVV) and 88–93 (RRGIAT). 1D-myo-inositol 2-(L-cysteinylamino)-2-deoxy-alpha-D-glucopyranoside-binding residues include Glu-179, Lys-229, and Glu-239. Acetyl-CoA-binding positions include 243–245 (LGV) and 250–256 (QGRGLGR). A 1D-myo-inositol 2-(L-cysteinylamino)-2-deoxy-alpha-D-glucopyranoside-binding site is contributed by Tyr-284. 289–294 (NIAAVR) serves as a coordination point for acetyl-CoA.

Belongs to the acetyltransferase family. MshD subfamily. In terms of assembly, monomer.

It carries out the reaction 1D-myo-inositol 2-(L-cysteinylamino)-2-deoxy-alpha-D-glucopyranoside + acetyl-CoA = mycothiol + CoA + H(+). Catalyzes the transfer of acetyl from acetyl-CoA to desacetylmycothiol (Cys-GlcN-Ins) to form mycothiol. This Mycobacterium ulcerans (strain Agy99) protein is Mycothiol acetyltransferase.